Consider the following 546-residue polypeptide: ATP-dependent rRNA helicase RRP3 (546 aa).

The tract at residues 1–108 (MSDFKRRKLE…DEEAEAQAAA (108 aa)) is disordered. 2 stretches are compositionally biased toward acidic residues: residues 60–77 (SEED…EEED) and 94–103 (EAEQSDEEAE). Positions 115–143 (KTFADLGVREELCDACENLGYKTATPIQT) match the Q motif motif. Positions 146-318 (IPLALAGKDI…RAALKNPVRV (173 aa)) constitute a Helicase ATP-binding domain. 159–166 (AETGSGKT) contacts ATP. The short motif at 265–268 (DEAD) is the DEAD box element. The Helicase C-terminal domain occupies 342–490 (YKDLYLIHLL…EEKVSRDEVM (149 aa)). A compositionally biased stretch (basic and acidic residues) spans 504-515 (VREMKDLHDQRK). The disordered stretch occupies residues 504-546 (VREMKDLHDQRKSGRGGRGGGRGGGRGGRGRGGRRDNMDMDEG). The span at 519–530 (GGRGGGRGGGRG) shows a compositional bias: gly residues. The span at 536-546 (GRRDNMDMDEG) shows a compositional bias: basic and acidic residues.

Belongs to the DEAD box helicase family. DDX47/RRP3 subfamily. Interacts with the SSU processome.

The protein localises to the nucleus. The enzyme catalyses ATP + H2O = ADP + phosphate + H(+). Its function is as follows. ATP-dependent rRNA helicase required for pre-ribosomal RNA processing. Involved in the maturation of the 35S-pre-rRNA and to its cleavage to mature 18S rRNA. The chain is ATP-dependent rRNA helicase RRP3 from Phaeosphaeria nodorum (strain SN15 / ATCC MYA-4574 / FGSC 10173) (Glume blotch fungus).